Consider the following 706-residue polypeptide: MATDHTSDAPDPKQRDLESARFRRDTGYLTTQQGVRVDHTDDALTVGERGPTLLEDFHAREKITHFDHERIPERVVHARGAGAYGYFEPYDDRLAQYTAAKFLTSPGTRTPVFVRFSTVAGSRGSADTVRDVRGFATKFYTEQGNYDLVGNNFPVFFIQDGIKFPVLVHAVKPEPHNEIPQAQSAHDTLWDFVSLQPETLHAIMWLMSDRALPRSYRMMQGFGVHTFRLVNARGRGTFVKFHWKPRLGVHSLIWDECQKIAGKDPDYNRRDLWEAIESGQYPEWELGVQLVAEDDEFSFDFDLLDATKIIPEEQVPVLPVGKMVLNRNPDNFFAETEQVAFHTANVVPGIDFTNDPLLQFRNFSYLDTQLIRLGGPNFAQLPVNRPVAQVRTNQHDGYAQHAIPQGRSSYFKNSIGGGCPALADEDVFRHYTQRVDGQTIGKRAEAFQNHYGQARMFFKSMSPVEAEHIVAAFAFELGKVEMPEIRSAVVAQLARVDDQLAAQVAAKLGLPEPPEEQVDESAPVSPALSQVTDGGDTIASRRIAVLAADGVDVVGTQRFTELMEQRGAVVEVLAPVAGGTLAGGSGGELRVDRSFTTMASVLYDAVVVACGPRSVSTLSDDGYAVHFVTEAYKHLKPIGAYGAGVDLLRKAGIDNRLAEDTDVLNDQAVVTTKAAADELPERFAEEFAAALAQHRCWQRRTDAVPA.

Catalysis depends on residues His77 and Asn151. Tyr365 is a heme binding site. The disordered stretch occupies residues 512 to 532 (EPPEEQVDESAPVSPALSQVT).

The protein belongs to the catalase family. HPII subfamily. Heme is required as a cofactor.

It is found in the cytoplasm. The catalysed reaction is 2 H2O2 = O2 + 2 H2O. Its function is as follows. Decomposes hydrogen peroxide into water and oxygen; serves to protect cells from the toxic effects of hydrogen peroxide. The sequence is that of Catalase HPII (katE) from Mycobacterium avium.